Here is a 146-residue protein sequence, read N- to C-terminus: Hemoglobin subunit beta (146 aa).

Residue Val1 is modified to N-acetylvaline. Positions 2–146 (HLTGEEKSLV…VANALAHKYH (145 aa)) constitute a Globin domain. Thr12 carries the post-translational modification Phosphothreonine. Ser44 carries the phosphoserine modification. Lys59 carries the N6-acetyllysine modification. His63 contacts heme b. Lys82 carries the post-translational modification N6-acetyllysine. His92 contributes to the heme b binding site. The residue at position 93 (Cys93) is an S-nitrosocysteine. Lys144 is modified (N6-acetyllysine).

The protein belongs to the globin family. As to quaternary structure, heterotetramer of two alpha chains and two beta chains. Red blood cells.

Its function is as follows. Involved in oxygen transport from the lung to the various peripheral tissues. The sequence is that of Hemoglobin subunit beta (HBB) from Ursus maritimus (Polar bear).